Reading from the N-terminus, the 306-residue chain is Homoserine O-acetyltransferase (306 aa).

Cys-142 acts as the Acyl-thioester intermediate in catalysis. The substrate site is built by Lys-163 and Ser-194. His-237 (proton acceptor) is an active-site residue. The active site involves Glu-239. Residue Arg-251 coordinates substrate.

This sequence belongs to the MetA family.

The protein localises to the cytoplasm. It carries out the reaction L-homoserine + acetyl-CoA = O-acetyl-L-homoserine + CoA. It participates in amino-acid biosynthesis; L-methionine biosynthesis via de novo pathway; O-acetyl-L-homoserine from L-homoserine: step 1/1. Transfers an acetyl group from acetyl-CoA to L-homoserine, forming acetyl-L-homoserine. The protein is Homoserine O-acetyltransferase of Clostridium tetani (strain Massachusetts / E88).